A 188-amino-acid polypeptide reads, in one-letter code: Elongation factor P (188 aa).

The protein belongs to the elongation factor P family.

It is found in the cytoplasm. Its pathway is protein biosynthesis; polypeptide chain elongation. Functionally, involved in peptide bond synthesis. Stimulates efficient translation and peptide-bond synthesis on native or reconstituted 70S ribosomes in vitro. Probably functions indirectly by altering the affinity of the ribosome for aminoacyl-tRNA, thus increasing their reactivity as acceptors for peptidyl transferase. The sequence is that of Elongation factor P from Phenylobacterium zucineum (strain HLK1).